We begin with the raw amino-acid sequence, 240 residues long: Uridylate kinase (240 aa).

13 to 16 (KLSG) lines the ATP pocket. The tract at residues 21 to 26 (GEKGFG) is involved in allosteric activation by GTP. Gly55 provides a ligand contact to UMP. ATP contacts are provided by Gly56 and Arg60. UMP-binding positions include Asp75 and 136-143 (IGNPYFST). ATP is bound by residues Asn164, Tyr170, and Asp173.

Belongs to the UMP kinase family. As to quaternary structure, homohexamer.

It localises to the cytoplasm. The catalysed reaction is UMP + ATP = UDP + ADP. It participates in pyrimidine metabolism; CTP biosynthesis via de novo pathway; UDP from UMP (UMPK route): step 1/1. Allosterically activated by GTP. Inhibited by UTP. In terms of biological role, catalyzes the reversible phosphorylation of UMP to UDP. This Staphylococcus aureus (strain USA300) protein is Uridylate kinase.